The following is a 371-amino-acid chain: Glycerol-3-phosphate dehydrogenase [NAD(+)] 2 (371 aa).

Residues 18 to 23 (GSGNWG), phenylalanine 50, and phenylalanine 106 contribute to the NAD(+) site. Lysine 129 contributes to the substrate binding site. Alanine 162 is an NAD(+) binding site. Lysine 222 serves as the catalytic Proton acceptor. NAD(+)-binding residues include arginine 294 and glutamine 323. A substrate-binding site is contributed by 294–295 (RN).

It belongs to the NAD-dependent glycerol-3-phosphate dehydrogenase family. Interacts with human CFH/complement factor H; the interaction is direct and enables the pathogen to evade the host innate immune system. Interacts with human CFHR1/complement factor H-related protein 1; the interaction is direct. Interacts with human PLG/plasminogen; the interaction is direct and provides active plasmin on the surface of fungal cells.

The protein resides in the secreted. It is found in the cell wall. Its subcellular location is the cytoplasm. It localises to the peroxisome. It catalyses the reaction sn-glycerol 3-phosphate + NAD(+) = dihydroxyacetone phosphate + NADH + H(+). In terms of biological role, may catalyze the production and accumulation of glycerol during hyperosmotic stress conditions. Glycerol acts as a osmoregulator that prevents loss of water and turgor of the cells. Mediates evasion of the host innate immune system by binding inhibitory components of the host alternative complement system, in a manner dependent on estrogen-induced inhibition of EBP1. The sequence is that of Glycerol-3-phosphate dehydrogenase [NAD(+)] 2 from Candida albicans (strain SC5314 / ATCC MYA-2876) (Yeast).